Reading from the N-terminus, the 491-residue chain is La-related protein 6 (491 aa).

The interval 1 to 87 (MAQSGGEARP…REDLEQEWKP (87 aa)) is disordered. Alanine 2 carries the post-translational modification N-acetylalanine. The segment covering 24–37 (EAEDVDELEDEEEG) has biased composition (acidic residues). A phosphoserine mark is found at serine 56 and serine 58. In terms of domain architecture, HTH La-type RNA-binding spans 86-177 (KPPDEELIKK…RRTTPVPLFP (92 aa)). Positions 184–296 (KMLLVYDLYL…KAVLIGMKPP (113 aa)) constitute an RRM domain. Positions 186–193 (LLVYDLYL) match the Nuclear export signal motif. Disordered regions lie at residues 293 to 403 (MKPP…EEGR) and 423 to 491 (SSVT…RACV). Positions 296–302 (PKKKPAK) match the Nuclear localization signal motif. The span at 332 to 346 (DESSANSSSDPESNP) shows a compositional bias: low complexity. 2 stretches are compositionally biased toward polar residues: residues 359–386 (NKLS…SSPL) and 444–453 (QEKSPGTSPL). An SUZ-C domain is found at 427 to 485 (PSGSPWVRRRRQAEMGTQEKSPGTSPLLSRKMQTADGLPVGVLRLPRGPDNTRGFHGHE). Over residues 482–491 (HGHERSRACV) the composition is skewed to basic and acidic residues.

In terms of assembly, interacts (via the HTH domain) with VIM/vimentin. Interacts (via C-terminus) with non-muscle myosin MYH10. Interacts (via C-terminus) with DHX9. As to expression, expressed in numerous tissues.

The protein resides in the cytoplasm. Its subcellular location is the nucleus. In terms of biological role, regulates the coordinated translation of type I collagen alpha-1 and alpha-2 mRNAs, CO1A1 and CO1A2. Stabilizes mRNAs through high-affinity binding of a stem-loop structure in their 5' UTR. This regulation requires VIM and MYH10 filaments, and the helicase DHX9. The protein is La-related protein 6 (LARP6) of Homo sapiens (Human).